A 556-amino-acid chain; its full sequence is Formate--tetrahydrofolate ligase (556 aa).

65-72 (TPAGEGKT) serves as a coordination point for ATP.

This sequence belongs to the formate--tetrahydrofolate ligase family.

The enzyme catalyses (6S)-5,6,7,8-tetrahydrofolate + formate + ATP = (6R)-10-formyltetrahydrofolate + ADP + phosphate. The protein operates within one-carbon metabolism; tetrahydrofolate interconversion. This is Formate--tetrahydrofolate ligase from Heliobacterium modesticaldum (strain ATCC 51547 / Ice1).